A 504-amino-acid polypeptide reads, in one-letter code: Ent-kaurene oxidase-like 3 (504 aa).

The helical transmembrane segment at 3-23 (SLLAAGAGGIGVAAAAVGGFI) threads the bilayer. Cys-448 provides a ligand contact to heme.

This sequence belongs to the cytochrome P450 family. The cofactor is heme. As to expression, expressed in leaf blades.

It is found in the membrane. Its function is as follows. May hydroxylate diterpenes. The sequence is that of Ent-kaurene oxidase-like 3 from Oryza sativa subsp. japonica (Rice).